The chain runs to 551 residues: Cilia- and flagella-associated protein 45 (551 aa).

3 disordered regions span residues Met1–Ser52, Met232–Arg256, and Glu385–Glu415. The span at Ala8–Arg18 shows a compositional bias: low complexity. The stretch at Ala276 to Glu524 forms a coiled coil. The span at Asp387 to Glu415 shows a compositional bias: basic and acidic residues.

It belongs to the CFAP45 family. As to quaternary structure, microtubule inner protein component of sperm flagellar doublet microtubules. Interacts with AK8; dimerization with AK8 may create a cavity at the interface of the dimer that can accommodate AMP. Interacts with CFAP52. Interacts with ENKUR. Directly interacts with DNALI1. Interacts with DNAH11. Interacts with DNAI1. In terms of tissue distribution, expressed in respiratory cells and in sperm (at protein level).

The protein localises to the cytoplasm. Its subcellular location is the cytoskeleton. The protein resides in the cilium axoneme. It is found in the flagellum axoneme. It localises to the cell projection. The protein localises to the cilium. Its subcellular location is the flagellum. Its function is as follows. Microtubule inner protein (MIP) part of the dynein-decorated doublet microtubules (DMTs) in cilia axoneme, which is required for motile cilia beating. It is an AMP-binding protein that may facilitate dynein ATPase-dependent ciliary and flagellar beating via adenine nucleotide homeostasis. May function as a donor of AMP to AK8 and hence promote ADP production. This chain is Cilia- and flagella-associated protein 45 (Cfap45), found in Mus musculus (Mouse).